We begin with the raw amino-acid sequence, 330 residues long: MKLNLPFNISPHVFVFILSFAFSLILGPVLIPMLTRLKFGQTVRDDGPKTHYKKTGTPTMGGMIFLIPVTVLAAFYAGHDRRILPLIFVTLGFGLIGFIDDFIKVVKKRKDGLYWNQKMFGLLLVAVTFAVYLSHTHTSDIIIPFMGMDKTVSLGWLFVPFVVLVLIASTNAVNITDGLDGLAAGVTLIVTVFFTIVAMTRSEWEYIKMFSAMVAGGCLGFLTFNAYPARIFMGDTGSLALGGAVGAIAILMKMPLILLIVGGIYVVEALSVMIQVLSFKLTGKRVFKMAPIHHHFELSGWKEVKVVLVFWTITVLLCILGFFALRLKFY.

The next 9 membrane-spanning stretches (helical) occupy residues 13–33 (VFVF…LIPM), 58–78 (PTMG…FYAG), 83–103 (ILPL…DDFI), 113–133 (LYWN…AVYL), 152–172 (VSLG…STNA), 179–199 (LDGL…IVAM), 209–229 (MFSA…AYPA), 231–250 (IFMG…AIAI), and 304–324 (VKVV…GFFA).

The protein belongs to the glycosyltransferase 4 family. MraY subfamily. Mg(2+) serves as cofactor.

Its subcellular location is the cell membrane. The catalysed reaction is UDP-N-acetyl-alpha-D-muramoyl-L-alanyl-gamma-D-glutamyl-meso-2,6-diaminopimeloyl-D-alanyl-D-alanine + di-trans,octa-cis-undecaprenyl phosphate = di-trans,octa-cis-undecaprenyl diphospho-N-acetyl-alpha-D-muramoyl-L-alanyl-D-glutamyl-meso-2,6-diaminopimeloyl-D-alanyl-D-alanine + UMP. The protein operates within cell wall biogenesis; peptidoglycan biosynthesis. Functionally, catalyzes the initial step of the lipid cycle reactions in the biosynthesis of the cell wall peptidoglycan: transfers peptidoglycan precursor phospho-MurNAc-pentapeptide from UDP-MurNAc-pentapeptide onto the lipid carrier undecaprenyl phosphate, yielding undecaprenyl-pyrophosphoryl-MurNAc-pentapeptide, known as lipid I. This Acetivibrio thermocellus (strain ATCC 27405 / DSM 1237 / JCM 9322 / NBRC 103400 / NCIMB 10682 / NRRL B-4536 / VPI 7372) (Clostridium thermocellum) protein is Phospho-N-acetylmuramoyl-pentapeptide-transferase.